Consider the following 474-residue polypeptide: UDP-N-acetylmuramate--L-alanine ligase (474 aa).

Residue 108-114 participates in ATP binding; the sequence is GTHGKTT.

Belongs to the MurCDEF family.

Its subcellular location is the cytoplasm. The enzyme catalyses UDP-N-acetyl-alpha-D-muramate + L-alanine + ATP = UDP-N-acetyl-alpha-D-muramoyl-L-alanine + ADP + phosphate + H(+). Its pathway is cell wall biogenesis; peptidoglycan biosynthesis. Cell wall formation. This chain is UDP-N-acetylmuramate--L-alanine ligase, found in Chloroflexus aggregans (strain MD-66 / DSM 9485).